The sequence spans 691 residues: Elongation factor G (691 aa).

The region spanning 8–283 (DMQRNIGIMA…AVVDFLPSPV (276 aa)) is the tr-type G domain. Residues 17 to 24 (AHIDAGKT), 81 to 85 (DTPGH), and 135 to 138 (NKMD) contribute to the GTP site.

This sequence belongs to the TRAFAC class translation factor GTPase superfamily. Classic translation factor GTPase family. EF-G/EF-2 subfamily.

The protein resides in the cytoplasm. Catalyzes the GTP-dependent ribosomal translocation step during translation elongation. During this step, the ribosome changes from the pre-translocational (PRE) to the post-translocational (POST) state as the newly formed A-site-bound peptidyl-tRNA and P-site-bound deacylated tRNA move to the P and E sites, respectively. Catalyzes the coordinated movement of the two tRNA molecules, the mRNA and conformational changes in the ribosome. This Nitratidesulfovibrio vulgaris (strain ATCC 29579 / DSM 644 / CCUG 34227 / NCIMB 8303 / VKM B-1760 / Hildenborough) (Desulfovibrio vulgaris) protein is Elongation factor G.